A 131-amino-acid polypeptide reads, in one-letter code: Small ribosomal subunit protein uS11 (131 aa).

This sequence belongs to the universal ribosomal protein uS11 family. As to quaternary structure, part of the 30S ribosomal subunit. Interacts with proteins S7 and S18. Binds to IF-3.

Functionally, located on the platform of the 30S subunit, it bridges several disparate RNA helices of the 16S rRNA. Forms part of the Shine-Dalgarno cleft in the 70S ribosome. This Bacillus pumilus (strain SAFR-032) protein is Small ribosomal subunit protein uS11.